Reading from the N-terminus, the 46-residue chain is Toxin Up-1 (46 aa).

It localises to the secreted. It is found in the nematocyst. The protein resides in the target cell membrane. Functionally, this toxin is a potent hemolysin devoid of enzymatic activity. Its hemolytic activity is inhibited by sphingomyelin but not by cholesterol. In erythrocyte membranes, it causes numerous cell membrane ruptures. It also exerces cytotoxicity to different cell lines. It exerces a positive inotropic effect. Also causes hemorrhage and necrosis by dilation of the blood vessels in the skin, and vascular leakage of fluids and rupture of alveolar walls of the lungs. Is a potent ichtyotoxin. May act as a pore-forming toxin. This Urticina piscivora (Fish-eating sea anemone) protein is Toxin Up-1.